Here is a 332-residue protein sequence, read N- to C-terminus: Inositol 2-dehydrogenase 2 (332 aa).

It belongs to the Gfo/Idh/MocA family. As to quaternary structure, homotetramer.

The enzyme catalyses myo-inositol + NAD(+) = scyllo-inosose + NADH + H(+). Involved in the oxidation of myo-inositol (MI) to 2-keto-myo-inositol (2KMI or 2-inosose). The sequence is that of Inositol 2-dehydrogenase 2 from Paenarthrobacter aurescens (strain TC1).